The following is a 533-amino-acid chain: Retinoic acid receptor RXR-beta (533 aa).

Residues 1 to 23 (MSWAARPPFLPQRHAAGQCGPVG) are disordered. The segment at 1 to 204 (MSWAARPPFL…PGGPGAGKRL (204 aa)) is modulating. Arg-25 is subject to Omega-N-methylarginine. The disordered stretch occupies residues 36–181 (WRRRRPWLDP…GSGPPEDVKP (146 aa)). Positions 46–61 (AAAAAAAVAGGEQQTP) are enriched in low complexity. The segment covering 67 to 82 (EAGRDGMGDSGRDSRS) has biased composition (basic and acidic residues). Composition is skewed to pro residues over residues 89–109 (NPLP…PPST) and 118–131 (APPP…PLGS). The span at 132–143 (PFPVISSSMGSP) shows a compositional bias: low complexity. Residues 144 to 153 (GLPPPAPPGF) show a composition bias toward pro residues. 2 NR C4-type zinc fingers span residues 205-225 (CAIC…CEGC) and 241-265 (CRDN…YQKC). Residues 205-270 (CAICGDRSSG…RYQKCLATGM (66 aa)) constitute a DNA-binding region (nuclear receptor). The tract at residues 271-295 (KREAVQEERQRGKDKDGDGEGAGGA) is hinge. Positions 276 to 288 (QEERQRGKDKDGD) are enriched in basic and acidic residues. Disordered regions lie at residues 276-299 (QEER…PEEM) and 313-336 (QKSD…NDPV). The NR LBD domain maps to 296-529 (PEEMPVDRIL…TFLMEMLEAP (234 aa)). Residues 320–329 (EGPGGTGGSG) are compositionally biased toward gly residues.

It belongs to the nuclear hormone receptor family. NR2 subfamily. As to quaternary structure, homodimer (in vitro). Heterodimer with other retinoic acid receptor family members. Binds DNA preferentially as a RAR/RXR heterodimer. Interacts with NR1H3. Interacts with AKAP13. In terms of tissue distribution, expressed in aortic endothelial cells (at protein level). Expressed in monocytes. Expressed in a variety of tumor cell lines.

The protein resides in the nucleus. It is found in the cytoplasm. Receptor for retinoic acid. Retinoic acid receptors bind as heterodimers to their target response elements in response to their ligands, all-trans or 9-cis retinoic acid, and regulate gene expression in various biological processes. The RAR/RXR heterodimers bind to the retinoic acid response elements (RARE). This chain is Retinoic acid receptor RXR-beta (RXRB), found in Homo sapiens (Human).